The sequence spans 343 residues: MYIDTGIMSNNIFLFAFFALVGLTRIEAMPTKGSEGTWDVDYEDQEHTGITCRENEHYNSTRIECEDECNDRNNKLCYRFQQFCWCNEGYIRNSSHICVKLEDCLKDEEQKSETLASSANNDSSKRLEDDLKLFSHDSVSHTSLEPETQAQKFNGIINEETLDLVFGKPENSWAENKPLETKTQAQKFNGIINEETLDLVFGKPENSWAENKPLETETQAQKFNGIINEETLDLVFGKPENSWAENKPLETKTQAQKFNGIINEETLDLVFGKPENSWAENKPLETKTQAQKFNGIINEETLDLVFGKPENSWAENKPLETKTQTQKFNGIIDQYTRSIVFVF.

The signal sequence occupies residues 1 to 28 (MYIDTGIMSNNIFLFAFFALVGLTRIEA). A TIL domain is found at 52-104 (CRENEHYNSTRIECEDECNDRNNKLCYRFQQFCWCNEGYIRNSSHICVKLEDC).

Belongs to the polydnaviridae EGF-like motif protein family. As to quaternary structure, interacts with host PAP1, PAP3 and SPH2.

Functionally, counteracts the host humoral immune response by inhibiting the processing and the amidolytic activity of host PAP1 and PAP3. Thereby, melanization of host hemolymph, normally producing several reactive intermediates toxic for viruses, is deregulated and proper immune response cannot occur. This Microplitis demolitor bracovirus (isolate Webb) (MdBV) protein is Protease inhibitor Egf1.5a (O1).